Consider the following 372-residue polypeptide: Carbamoyl phosphate synthase small chain (372 aa).

The CPSase stretch occupies residues 1–182; it reads MTLYCKRGYK…PKAPIVHLGN (182 aa). Serine 53, glycine 234, and glycine 236 together coordinate L-glutamine. The Glutamine amidotransferase type-1 domain occupies 186-372; it reads TIVVVDCGVK…KFKKMVSRNA (187 aa). The active-site Nucleophile is cysteine 262. L-glutamine-binding residues include leucine 263, glutamine 266, asparagine 304, glycine 306, and tyrosine 307. Catalysis depends on residues histidine 347 and glutamate 349.

The protein belongs to the CarA family. Composed of two chains; the small (or glutamine) chain promotes the hydrolysis of glutamine to ammonia, which is used by the large (or ammonia) chain to synthesize carbamoyl phosphate. Tetramer of heterodimers (alpha,beta)4.

The catalysed reaction is hydrogencarbonate + L-glutamine + 2 ATP + H2O = carbamoyl phosphate + L-glutamate + 2 ADP + phosphate + 2 H(+). It catalyses the reaction L-glutamine + H2O = L-glutamate + NH4(+). The protein operates within amino-acid biosynthesis; L-arginine biosynthesis; carbamoyl phosphate from bicarbonate: step 1/1. Its pathway is pyrimidine metabolism; UMP biosynthesis via de novo pathway; (S)-dihydroorotate from bicarbonate: step 1/3. In terms of biological role, small subunit of the glutamine-dependent carbamoyl phosphate synthetase (CPSase). CPSase catalyzes the formation of carbamoyl phosphate from the ammonia moiety of glutamine, carbonate, and phosphate donated by ATP, constituting the first step of 2 biosynthetic pathways, one leading to arginine and/or urea and the other to pyrimidine nucleotides. The small subunit (glutamine amidotransferase) binds and cleaves glutamine to supply the large subunit with the substrate ammonia. This chain is Carbamoyl phosphate synthase small chain, found in Sulfurisphaera tokodaii (strain DSM 16993 / JCM 10545 / NBRC 100140 / 7) (Sulfolobus tokodaii).